The chain runs to 37 residues: Large ribosomal subunit protein bL36c (37 aa).

This sequence belongs to the bacterial ribosomal protein bL36 family.

It is found in the plastid. Its subcellular location is the chloroplast. The protein is Large ribosomal subunit protein bL36c of Stigeoclonium helveticum (Green alga).